The chain runs to 589 residues: Probable translation initiation factor IF-2 (589 aa).

One can recognise a tr-type G domain in the interval 5–219 (IRTPIVCVLG…IMIGLAQRYL (215 aa)). A G1 region spans residues 14 to 21 (GHVDHGKT). 14–21 (GHVDHGKT) is a binding site for GTP. Residues 39-43 (AITQH) are G2. The segment at 75 to 78 (DTPG) is G3. GTP is bound by residues 75 to 79 (DTPGH) and 129 to 132 (TKLD). The interval 129-132 (TKLD) is G4. A G5 region spans residues 197–199 (SSM).

It belongs to the TRAFAC class translation factor GTPase superfamily. Classic translation factor GTPase family. IF-2 subfamily.

In terms of biological role, function in general translation initiation by promoting the binding of the formylmethionine-tRNA to ribosomes. Seems to function along with eIF-2. The sequence is that of Probable translation initiation factor IF-2 from Methanocorpusculum labreanum (strain ATCC 43576 / DSM 4855 / Z).